The following is a 31-amino-acid chain: Cytochrome b6-f complex subunit 8 (31 aa).

The helical transmembrane segment at 5–25 (IVSLAWAALMVVFTFSLSLVV) threads the bilayer.

Belongs to the PetN family. The 4 large subunits of the cytochrome b6-f complex are cytochrome b6, subunit IV (17 kDa polypeptide, PetD), cytochrome f and the Rieske protein, while the 4 small subunits are PetG, PetL, PetM and PetN. The complex functions as a dimer.

Its subcellular location is the plastid. It localises to the chloroplast thylakoid membrane. Functionally, component of the cytochrome b6-f complex, which mediates electron transfer between photosystem II (PSII) and photosystem I (PSI), cyclic electron flow around PSI, and state transitions. The polypeptide is Cytochrome b6-f complex subunit 8 (Cicer arietinum (Chickpea)).